The primary structure comprises 94 residues: ATP-dependent Clp protease adapter protein ClpS (94 aa).

The protein belongs to the ClpS family. In terms of assembly, binds to the N-terminal domain of the chaperone ClpA.

Functionally, involved in the modulation of the specificity of the ClpAP-mediated ATP-dependent protein degradation. This is ATP-dependent Clp protease adapter protein ClpS from Thermosynechococcus vestitus (strain NIES-2133 / IAM M-273 / BP-1).